Consider the following 1050-residue polypeptide: Diacylglycerol kinase iota (1050 aa).

Disordered regions lie at residues 52–73 and 325–356; these read NPSSSAGEERGATGGSSSSGSG and PQNSLKASNRKKKRTSFKRKASKRGTEQENKG. A compositionally biased stretch (basic residues) spans 332-347; the sequence is SNRKKKRTSFKRKASK. The DAGKc domain occupies 367-502; it reads PLMKPLLVFV…DRWNLHVERN (136 aa). ANK repeat units lie at residues 943 to 972 and 979 to 1008; these read GHCSLLHYAAKTGNGEIVKYILDHGPAELL and TGETALHKAACQRNRAVCQLLVDAGASLRQ. Positions 1048–1050 match the PDZ-binding motif; sequence TAV.

The protein belongs to the eukaryotic diacylglycerol kinase family. As to quaternary structure, interacts (via PDZ-binding motif) with DLG4; controls the localization of DGKI to the synapse. Interacts (via PDZ-binding motif) with DLG1. Interacts (via PDZ-binding motif) with DLG2. Interacts (via PDZ-binding motif) with DLG3. May interact with RASGRP3; involved in the regulation of RASGRP3 activity. In terms of tissue distribution, specifically expressed in brain (at protein level). Expressed in hippocampus, cerebellum, brain stem and spinal cord (at protein level). Highly expressed in hippocampus, cerebellar cortex, olfactory bulb, and olfactory tubercle and to lower extent in the cerebral cortex, caudate putamen, and thalamus. Not detected in the white matter. Also expressed in eye. Major isoform in brain (at protein level). As to expression, minor isoform in brain (at protein level). In terms of tissue distribution, expressed in brain (at protein level).

Its subcellular location is the cell projection. It is found in the axon. The protein localises to the dendrite. It localises to the presynapse. The protein resides in the postsynapse. Its subcellular location is the postsynaptic density. It is found in the synaptic cell membrane. The protein localises to the cytoplasmic vesicle. It localises to the secretory vesicle. The protein resides in the synaptic vesicle membrane. Its subcellular location is the cytoplasm. It is found in the cytosol. The protein localises to the nucleus. The catalysed reaction is a 1,2-diacyl-sn-glycerol + ATP = a 1,2-diacyl-sn-glycero-3-phosphate + ADP + H(+). The enzyme catalyses 1,2-di-(9Z-octadecenoyl)-sn-glycerol + ATP = 1,2-di-(9Z-octadecenoyl)-sn-glycero-3-phosphate + ADP + H(+). It carries out the reaction 1-octadecanoyl-2-(9Z,12Z)-octadecadienoyl-sn-glycerol + ATP = 1-octadecanoyl-2-(9Z,12Z-octadecadienoyl)-sn-glycero-3-phosphate + ADP + H(+). It catalyses the reaction 1-octadecanoyl-2-(5Z,8Z,11Z,14Z-eicosatetraenoyl)-sn-glycerol + ATP = 1-octadecanoyl-2-(5Z,8Z,11Z,14Z-eicosatetraenoyl)-sn-glycero-3-phosphate + ADP + H(+). It participates in lipid metabolism; glycerolipid metabolism. Its activity is regulated as follows. Activated by phosphatidylserine. Functionally, diacylglycerol kinase that converts diacylglycerol/DAG into phosphatidic acid/phosphatidate/PA and regulates the respective levels of these two bioactive lipids. Thereby, acts as a central switch between the signaling pathways activated by these second messengers with different cellular targets and opposite effects in numerous biological processes. Has probably no preference for any of the diacylglycerols in terms of the acyl chain composition, especially for the acyl chain at the sn-2 position. By controlling the diacylglycerol/DAG-mediated activation of RASGRP3, negatively regulates the Rap1 signaling pathway. May play a role in presynaptic diacylglycerol/DAG signaling and control neurotransmitter release during metabotropic glutamate receptor-dependent long-term depression. Its function is as follows. Has a decreased affinity for ATP and a reduced diacylglycerol kinase activity. Has no preference for any of the diacylglycerols in terms of the acyl chain composition. Has no diacylglycerol kinase activity. The chain is Diacylglycerol kinase iota from Rattus norvegicus (Rat).